We begin with the raw amino-acid sequence, 384 residues long: Probable RNA 3'-terminal phosphate cyclase-like protein (384 aa).

Belongs to the RNA 3'-terminal cyclase family. Type 2 subfamily. Part of the small subunit (SSU) processome, composed of more than 70 proteins and the RNA chaperone small nucleolar RNA (snoRNA) U3.

Its subcellular location is the nucleus. The protein localises to the nucleolus. Functionally, part of the small subunit (SSU) processome, first precursor of the small eukaryotic ribosomal subunit. During the assembly of the SSU processome in the nucleolus, many ribosome biogenesis factors, an RNA chaperone and ribosomal proteins associate with the nascent pre-rRNA and work in concert to generate RNA folding, modifications, rearrangements and cleavage as well as targeted degradation of pre-ribosomal RNA by the RNA exosome. Does not have cyclase activity. The sequence is that of Probable RNA 3'-terminal phosphate cyclase-like protein (Rtc1) from Drosophila melanogaster (Fruit fly).